Consider the following 389-residue polypeptide: Phosphopentomutase (389 aa).

Mn(2+)-binding residues include aspartate 9, aspartate 282, histidine 287, aspartate 323, histidine 324, and histidine 335.

It belongs to the phosphopentomutase family. Mn(2+) serves as cofactor.

Its subcellular location is the cytoplasm. The catalysed reaction is 2-deoxy-alpha-D-ribose 1-phosphate = 2-deoxy-D-ribose 5-phosphate. It catalyses the reaction alpha-D-ribose 1-phosphate = D-ribose 5-phosphate. It functions in the pathway carbohydrate degradation; 2-deoxy-D-ribose 1-phosphate degradation; D-glyceraldehyde 3-phosphate and acetaldehyde from 2-deoxy-alpha-D-ribose 1-phosphate: step 1/2. Its function is as follows. Isomerase that catalyzes the conversion of deoxy-ribose 1-phosphate (dRib-1-P) and ribose 1-phosphate (Rib-1-P) to deoxy-ribose 5-phosphate (dRib-5-P) and ribose 5-phosphate (Rib-5-P), respectively. This is Phosphopentomutase from Pseudothermotoga lettingae (strain ATCC BAA-301 / DSM 14385 / NBRC 107922 / TMO) (Thermotoga lettingae).